Consider the following 383-residue polypeptide: S-adenosylmethionine:tRNA ribosyltransferase-isomerase (383 aa).

It belongs to the QueA family. In terms of assembly, monomer.

It is found in the cytoplasm. It carries out the reaction 7-aminomethyl-7-carbaguanosine(34) in tRNA + S-adenosyl-L-methionine = epoxyqueuosine(34) in tRNA + adenine + L-methionine + 2 H(+). It functions in the pathway tRNA modification; tRNA-queuosine biosynthesis. Its function is as follows. Transfers and isomerizes the ribose moiety from AdoMet to the 7-aminomethyl group of 7-deazaguanine (preQ1-tRNA) to give epoxyqueuosine (oQ-tRNA). This chain is S-adenosylmethionine:tRNA ribosyltransferase-isomerase, found in Rickettsia prowazekii (strain Madrid E).